Here is a 512-residue protein sequence, read N- to C-terminus: RCC1 domain-containing protein DDB_G0279253 (512 aa).

RCC1 repeat units lie at residues 1 to 56, 58 to 134, 135 to 185, 197 to 248, 249 to 319, 321 to 384, 386 to 443, and 454 to 512; these read MKIY…MIID, GDLY…ACDN, NGNI…NNNN, SGGV…ALSS, ENDV…LLDI, FKNV…LLTN, DKLY…IQVY, and NNNI…FILP. Polar residues predominate over residues 66-77; the sequence is NDSGQLGINSNE. 2 disordered regions span residues 66-85 and 162-200; these read NDSGQLGINSNEQQQQQQQQ and STSNNKNNNNNNNNNNNNNNNNNNNNNNNNNNNNNSGGV. Residues 162–196 are compositionally biased toward low complexity; sequence STSNNKNNNNNNNNNNNNNNNNNNNNNNNNNNNNN.

The chain is RCC1 domain-containing protein DDB_G0279253 from Dictyostelium discoideum (Social amoeba).